Reading from the N-terminus, the 196-residue chain is APGW-amide-related neuropeptide (196 aa).

Positions 1–22 (METLNIFLVIFSLLGTIIIASS) are cleaved as a signal peptide. Residues 23 to 48 (SDESSERKKRDLDTIDDTNNDFLTAD) constitute a propeptide that is removed on maturation. W54 carries the post-translational modification Tryptophan amide. A propeptide spanning residues 58 to 68 (SFDDDILNNLD) is cleaved from the precursor. The residue at position 74 (W74) is a Tryptophan amide. Residues 78–88 (SDMLFDSEEIE) constitute a propeptide that is removed on maturation. Position 94 is a tryptophan amide (W94). A propeptide spanning residues 98-105 (SSSLYDDE) is cleaved from the precursor. Position 111 is a tryptophan amide (W111). Residues 115–129 (SSALLDDLSLYNSIV) constitute a propeptide that is removed on maturation. W135 is subject to Tryptophan amide. The propeptide occupies 139–146 (SDTFKVDI). A tryptophan amide mark is found at W151 and W158. A propeptide spanning residues 162–196 (SGPNMCMDFQDEILQLYKLLNEAEKLHSECEALNI) is cleaved from the precursor.

As to expression, expressed in cerebral, pedal and visceral ganglia. TPGW-amide is found in pedal and cerebral ganglia and in shell adductor muscle (at protein level). RPGW-amide and KPGW-amide are found in pedal retractor muscle, ABRM and shell adductor muscle (at protein level).

In terms of biological role, RPGW-amide, KPGW-amide and TPGW-amide tetrapeptides are involved in control of muscle contraction and may function as neurotransmitters. These peptides increase tension of the pedal retractor muscle and, in conjunction with FMRF-amide, increase peak tension of the anterior byssus retractor muscle (ABRM). The polypeptide is APGW-amide-related neuropeptide (Mytilus edulis (Blue mussel)).